Reading from the N-terminus, the 166-residue chain is Interferon gamma (166 aa).

Residues 1-23 (MKYTSYILAFQLCVVLGSLGCYC) form the signal peptide. Pyrrolidone carboxylic acid is present on Gln-24. Residues Asn-48, Asn-86, and Asn-120 are each glycosylated (N-linked (GlcNAc...) asparagine).

The protein belongs to the type II (or gamma) interferon family. Homodimer. Interacts with IFNGR1 (via extracellular domain); this interaction promotes IFNGR1 dimerization. In terms of tissue distribution, released primarily from activated T lymphocytes.

It localises to the secreted. Its function is as follows. Type II interferon produced by immune cells such as T-cells and NK cells that plays crucial roles in antimicrobial, antiviral, and antitumor responses by activating effector immune cells and enhancing antigen presentation. Primarily signals through the JAK-STAT pathway after interaction with its receptor IFNGR1 to affect gene regulation. Upon IFNG binding, IFNGR1 intracellular domain opens out to allow association of downstream signaling components JAK2, JAK1 and STAT1, leading to STAT1 activation, nuclear translocation and transcription of IFNG-regulated genes. Many of the induced genes are transcription factors such as IRF1 that are able to further drive regulation of a next wave of transcription. Plays a role in class I antigen presentation pathway by inducing a replacement of catalytic proteasome subunits with immunoproteasome subunits. In turn, increases the quantity, quality, and repertoire of peptides for class I MHC loading. Increases the efficiency of peptide generation also by inducing the expression of activator PA28 that associates with the proteasome and alters its proteolytic cleavage preference. Up-regulates as well MHC II complexes on the cell surface by promoting expression of several key molecules such as cathepsins B/CTSB, H/CTSH, and L/CTSL. Participates in the regulation of hematopoietic stem cells during development and under homeostatic conditions by affecting their development, quiescence, and differentiation. The protein is Interferon gamma (IFNG) of Callithrix jacchus (White-tufted-ear marmoset).